Reading from the N-terminus, the 64-residue chain is Large ribosomal subunit protein bL33 (64 aa).

Belongs to the bacterial ribosomal protein bL33 family.

The polypeptide is Large ribosomal subunit protein bL33 (Nostoc sp. (strain PCC 7120 / SAG 25.82 / UTEX 2576)).